Reading from the N-terminus, the 136-residue chain is Cyclase aurE (136 aa).

It belongs to the aurE cyclase family.

The protein operates within polyketide biosynthesis. Its function is as follows. Cyclase; part of the gene cluster that mediates the biosynthesis of aurovertins, fungal polyketides that exhibit potent inhibition of adenosine triphosphate synthase. Tha biosynthesis starts with the HR-PKS aurA that selects propionate as the starter unit; synthesizes a hexa-ene chain through the repeated functions of the KR and DH domains in the first six iterations; selectively introduces three alpha-methyl substitutions at C4, C6, and C16 using the S-adensylmethionine-dependent cMET; and shuts off KR and DH in the last three iterations to afford a 1,3,5-triketo portion that can undergo intramolecular cyclization to yield the alpha-pyrone intermediate. AurE may act as a cyclase and enhances the rate of pyrone formation and product release of aurA. The methyltransferase aurB then methylates the C17 hydroxyl group. C17 methylation is required to initiate epoxidation by the downstream monooxygenase aurC. The monooxygenase aurC and the epoxide hydrolase aurD can iteratively transform the terminal triene portion of the methylated precursor into the dioxabicyclo[3.2.1]octane scaffold of aurovertin E. Epoxidation modifications of the precursor occur in two separate steps; bis-epoxidation of the two terminal olefins takes place first, followed by another epoxidation that occurs at C7-C8 after tetrahydrofuran formation. The O-acyltransferase aurG converts aurovertin E to aurovertin A. The chain is Cyclase aurE from Calcarisporium arbuscula (Dendryphion arbuscula).